A 278-amino-acid chain; its full sequence is Small ribosomal subunit protein uS2 (278 aa).

2 disordered regions span residues 216–235 and 250–278; these read EAAA…TQWD and NFAA…EWTN. Residues 256–278 are compositionally biased toward low complexity; the sequence is ADGNWGATTGGDWAAAGGEEWTN.

Belongs to the universal ribosomal protein uS2 family. As to quaternary structure, component of the small ribosomal subunit. Mature ribosomes consist of a small (40S) and a large (60S) subunit. The 40S subunit contains about 33 different proteins and 1 molecule of RNA (18S). The 60S subunit contains about 49 different proteins and 3 molecules of RNA (25S, 5.8S and 5S). Interacts with ribosomal protein S21.

Its subcellular location is the cytoplasm. Functionally, required for the assembly and/or stability of the 40S ribosomal subunit. Required for the processing of the 20S rRNA-precursor to mature 18S rRNA in a late step of the maturation of 40S ribosomal subunits. In Monosiga brevicollis (Choanoflagellate), this protein is Small ribosomal subunit protein uS2.